Here is a 221-residue protein sequence, read N- to C-terminus: Thiamine-phosphate synthase (221 aa).

Residues 39–43 (QLRCK) and N76 each bind 4-amino-2-methyl-5-(diphosphooxymethyl)pyrimidine. The Mg(2+) site is built by D77 and D96. S114 contributes to the 4-amino-2-methyl-5-(diphosphooxymethyl)pyrimidine binding site. Residue 140-142 (TPT) participates in 2-[(2R,5Z)-2-carboxy-4-methylthiazol-5(2H)-ylidene]ethyl phosphate binding. K143 provides a ligand contact to 4-amino-2-methyl-5-(diphosphooxymethyl)pyrimidine. A 2-[(2R,5Z)-2-carboxy-4-methylthiazol-5(2H)-ylidene]ethyl phosphate-binding site is contributed by G171.

This sequence belongs to the thiamine-phosphate synthase family. Mg(2+) is required as a cofactor.

The enzyme catalyses 2-[(2R,5Z)-2-carboxy-4-methylthiazol-5(2H)-ylidene]ethyl phosphate + 4-amino-2-methyl-5-(diphosphooxymethyl)pyrimidine + 2 H(+) = thiamine phosphate + CO2 + diphosphate. It carries out the reaction 2-(2-carboxy-4-methylthiazol-5-yl)ethyl phosphate + 4-amino-2-methyl-5-(diphosphooxymethyl)pyrimidine + 2 H(+) = thiamine phosphate + CO2 + diphosphate. It catalyses the reaction 4-methyl-5-(2-phosphooxyethyl)-thiazole + 4-amino-2-methyl-5-(diphosphooxymethyl)pyrimidine + H(+) = thiamine phosphate + diphosphate. It functions in the pathway cofactor biosynthesis; thiamine diphosphate biosynthesis; thiamine phosphate from 4-amino-2-methyl-5-diphosphomethylpyrimidine and 4-methyl-5-(2-phosphoethyl)-thiazole: step 1/1. In terms of biological role, condenses 4-methyl-5-(beta-hydroxyethyl)thiazole monophosphate (THZ-P) and 2-methyl-4-amino-5-hydroxymethyl pyrimidine pyrophosphate (HMP-PP) to form thiamine monophosphate (TMP). The chain is Thiamine-phosphate synthase from Deinococcus geothermalis (strain DSM 11300 / CIP 105573 / AG-3a).